The sequence spans 68 residues: Large ribosomal subunit protein bL32 (68 aa).

Belongs to the bacterial ribosomal protein bL32 family.

This Orientia tsutsugamushi (strain Boryong) (Rickettsia tsutsugamushi) protein is Large ribosomal subunit protein bL32.